Here is a 559-residue protein sequence, read N- to C-terminus: Prolyl 4-hydroxylase subunit alpha-1 (559 aa).

An N-terminal signal peptide occupies residues 1-16 (MRLALLVLATIGYAVA). A glycan (N-linked (GlcNAc...) asparagine) is linked at asparagine 158. Residues 404–512 (TAEELQIANY…KWVSNKWIHE (109 aa)) form the Fe2OG dioxygenase domain. Residues histidine 422, aspartate 424, and histidine 493 each contribute to the Fe cation site. Lysine 503 lines the 2-oxoglutarate pocket.

It belongs to the P4HA family. In terms of assembly, heterotetramer of two alpha chains and two beta chains. Exists either as a phy-1(2)/pdi-2(2) tetramer or as a phy-1/phy-2/pdi-2(2) tetramer. It depends on Fe(2+) as a cofactor. L-ascorbate serves as cofactor.

The protein resides in the endoplasmic reticulum lumen. The enzyme catalyses L-prolyl-[collagen] + 2-oxoglutarate + O2 = trans-4-hydroxy-L-prolyl-[collagen] + succinate + CO2. Catalyzes the post-translational formation of 4-hydroxyproline in -Xaa-Pro-Gly- sequences in collagens and other proteins. This is Prolyl 4-hydroxylase subunit alpha-1 (dpy-18) from Caenorhabditis elegans.